A 227-amino-acid polypeptide reads, in one-letter code: Cytochrome c oxidase subunit 2 (227 aa).

The Mitochondrial intermembrane segment spans residues 1 to 14 (MAYPFELGFQDATS). The chain crosses the membrane as a helical span at residues 15 to 45 (PIMEELLHFHDHTLMIVFLISSLVLYIISLM). Residues 46 to 59 (LTTKLTHTSTMDAQ) are Mitochondrial matrix-facing. The helical transmembrane segment at 60-87 (EVETIWTILPAIILILIALPSLRILYMM) threads the bilayer. The Mitochondrial intermembrane portion of the chain corresponds to 88-227 (DEINDPSLTV…HFENWSSSML (140 aa)). His161, Cys196, Glu198, Cys200, His204, and Met207 together coordinate Cu cation. Residue Glu198 coordinates Mg(2+).

This sequence belongs to the cytochrome c oxidase subunit 2 family. As to quaternary structure, component of the cytochrome c oxidase (complex IV, CIV), a multisubunit enzyme composed of 14 subunits. The complex is composed of a catalytic core of 3 subunits MT-CO1, MT-CO2 and MT-CO3, encoded in the mitochondrial DNA, and 11 supernumerary subunits COX4I, COX5A, COX5B, COX6A, COX6B, COX6C, COX7A, COX7B, COX7C, COX8 and NDUFA4, which are encoded in the nuclear genome. The complex exists as a monomer or a dimer and forms supercomplexes (SCs) in the inner mitochondrial membrane with NADH-ubiquinone oxidoreductase (complex I, CI) and ubiquinol-cytochrome c oxidoreductase (cytochrome b-c1 complex, complex III, CIII), resulting in different assemblies (supercomplex SCI(1)III(2)IV(1) and megacomplex MCI(2)III(2)IV(2)). Found in a complex with TMEM177, COA6, COX18, COX20, SCO1 and SCO2. Interacts with TMEM177 in a COX20-dependent manner. Interacts with COX20. Interacts with COX16. It depends on Cu cation as a cofactor.

The protein resides in the mitochondrion inner membrane. The catalysed reaction is 4 Fe(II)-[cytochrome c] + O2 + 8 H(+)(in) = 4 Fe(III)-[cytochrome c] + 2 H2O + 4 H(+)(out). In terms of biological role, component of the cytochrome c oxidase, the last enzyme in the mitochondrial electron transport chain which drives oxidative phosphorylation. The respiratory chain contains 3 multisubunit complexes succinate dehydrogenase (complex II, CII), ubiquinol-cytochrome c oxidoreductase (cytochrome b-c1 complex, complex III, CIII) and cytochrome c oxidase (complex IV, CIV), that cooperate to transfer electrons derived from NADH and succinate to molecular oxygen, creating an electrochemical gradient over the inner membrane that drives transmembrane transport and the ATP synthase. Cytochrome c oxidase is the component of the respiratory chain that catalyzes the reduction of oxygen to water. Electrons originating from reduced cytochrome c in the intermembrane space (IMS) are transferred via the dinuclear copper A center (CU(A)) of subunit 2 and heme A of subunit 1 to the active site in subunit 1, a binuclear center (BNC) formed by heme A3 and copper B (CU(B)). The BNC reduces molecular oxygen to 2 water molecules using 4 electrons from cytochrome c in the IMS and 4 protons from the mitochondrial matrix. The protein is Cytochrome c oxidase subunit 2 (MT-CO2) of Tamias merriami (Merriam's chipmunk).